The primary structure comprises 201 residues: Prostamide/prostaglandin F synthase (201 aa).

This sequence belongs to the peroxiredoxin-like PRXL2 family. Prostamide/prostaglandin F synthase subfamily.

Its subcellular location is the cytoplasm. The protein resides in the cytosol. The catalysed reaction is prostaglandin H2 + [thioredoxin]-dithiol = prostaglandin F2alpha + [thioredoxin]-disulfide. It catalyses the reaction prostamide F2alpha + [thioredoxin]-disulfide = prostamide H2 + [thioredoxin]-dithiol. Catalyzes the reduction of prostaglandin-ethanolamide H(2) (prostamide H(2)) to prostamide F(2alpha) with NADPH as proton donor. Also able to reduce prostaglandin H(2) to prostaglandin F(2alpha). The protein is Prostamide/prostaglandin F synthase (prxl2b) of Xenopus tropicalis (Western clawed frog).